The chain runs to 180 residues: uncharacterized protein (180 aa).

Residues 3–33 are a coiled coil; the sequence is QQQSNNSNDNKEQLDRVIESLNRVNSETKQI.

This is an uncharacterized protein from Acanthamoeba polyphaga (Amoeba).